We begin with the raw amino-acid sequence, 614 residues long: MNAQLSALQQQAQQLSESVTRPIPGSRKIHVPGSRPDLQVPMREIALTRTPTLFGGEENAPVTVYDTSGPYTDPEVRIDLSAGLPALRRGWVEERGDTERLEGLSSSFGRDREHDPKLDAVRFPARSLPRRARAGANVTQMHYARRGIITPEMEFVAIRENQRLEAIRDAGLLQQHPGEAFGASIQKIITPEFVRDEIARGRAVLPNNINHPESEPMIIGRNFLTKINANIGNSAVSSGIAEEVEKLVWAIRWGGDTVMDLSTGKHIHETREWIIRNSPVAIGTVPIYQALEKVDGRAEALTWEIFRDTLIEQAEQGVDYFTIHAGVLLRYVPLTAKRVTGIVSRGGSIMAKWCLAHHKENFLYTHFEDICEIMKAYDVTFSLGDGLRPGCIADANDAAQFGELETLGELTKIAWKHDVQTMIEGPGHVPMQLIKENMDKQLRECGEAPFYTLGPLTTDIAPGYDHITSAIGAAMIGWFGTAMLCYVTPKEHLGLPNRQDVRDGIMAYRIAAHAADLAKGHPGAQVRDNALSKARFEFRWEDQFHLGLDPEKAKEFHDETLPKDAHKLAHFCSMCGPHFCSMKITQDVREYAESGMKERSEAFRAAGAEVYHQG.

Positions 1–16 are enriched in low complexity; sequence MNAQLSALQQQAQQLS. The interval 1-36 is disordered; that stretch reads MNAQLSALQQQAQQLSESVTRPIPGSRKIHVPGSRP. Substrate is bound by residues asparagine 230, methionine 259, tyrosine 288, histidine 324, 344–346, 385–388, and glutamate 424; these read SRG and DGLR. Position 428 (histidine 428) interacts with Zn(2+). Substrate is bound at residue tyrosine 451. Histidine 492 is a Zn(2+) binding site. Positions 572, 575, and 580 each coordinate [4Fe-4S] cluster.

It belongs to the ThiC family. As to quaternary structure, homodimer. [4Fe-4S] cluster serves as cofactor.

The catalysed reaction is 5-amino-1-(5-phospho-beta-D-ribosyl)imidazole + S-adenosyl-L-methionine = 4-amino-2-methyl-5-(phosphooxymethyl)pyrimidine + CO + 5'-deoxyadenosine + formate + L-methionine + 3 H(+). It participates in cofactor biosynthesis; thiamine diphosphate biosynthesis. In terms of biological role, catalyzes the synthesis of the hydroxymethylpyrimidine phosphate (HMP-P) moiety of thiamine from aminoimidazole ribotide (AIR) in a radical S-adenosyl-L-methionine (SAM)-dependent reaction. The sequence is that of Phosphomethylpyrimidine synthase from Stenotrophomonas maltophilia (strain R551-3).